Reading from the N-terminus, the 206-residue chain is Putative amino-acid transporter YggA (206 aa).

6 helical membrane passes run 1 to 21 (MFATTLQGFTLGLAMIIPIGA), 37 to 57 (LLAATLCCLCDLILIGIGVFG), 65 to 85 (SPIGLALLTWGGVLFLCWFGI), 116 to 136 (LGVTLLNPHVYLDTLMLLGSF), 148 to 168 (FAAGAMLASLVWFYSLAFGAA), and 185 to 205 (TIVGLIMLGLALQLASGALLA).

It belongs to the LysE/ArgO transporter (TC 2.A.75) family.

The protein resides in the cell membrane. This is Putative amino-acid transporter YggA (yggA) from Aeromonas salmonicida.